Here is a 347-residue protein sequence, read N- to C-terminus: MDLQAQLEELKTKTLETLQSLTGNHTKELQDLRVAVLGKKGSLTELLKGLKDLSNDLRPVVGKQVNEVRDLLTKAFEEQAKIVEAAKIQAQLDAESIDVTLPGRQMTLGHRHVLTQTSEEIEDIFLGMGFQIVDGFEVEKDYYNFERMNLPKDHPARDMQDTFYITEEILLRTHTSPVQARTLDQHDFSKGPLKMVSPGRVFRRDTDDATHSHQFHQIEGLVVGKNISMGDLKGTLEMIIKKMFGDERSIRLRPSYFPFTEPSVEVDVSCFKCGGKGCNVCKKTGWIEILGAGMVHPSVLEMSGVDAKEYSGFAFGLGQERIAMLRYGINDIRGFYQGDQRFSEQFN.

Glu261 contacts Mg(2+).

It belongs to the class-II aminoacyl-tRNA synthetase family. Phe-tRNA synthetase alpha subunit type 1 subfamily. As to quaternary structure, tetramer of two alpha and two beta subunits. It depends on Mg(2+) as a cofactor.

Its subcellular location is the cytoplasm. The catalysed reaction is tRNA(Phe) + L-phenylalanine + ATP = L-phenylalanyl-tRNA(Phe) + AMP + diphosphate + H(+). This chain is Phenylalanine--tRNA ligase alpha subunit, found in Streptococcus pyogenes serotype M1.